A 552-amino-acid chain; its full sequence is Putative E3 ubiquitin-protein ligase ARI6 (552 aa).

A TRIAD supradomain region spans residues 129 to 343 (REFTCGICFE…GGYYACNRYE (215 aa)). Zn(2+) is bound by residues C133, C136, C150, H152, C155, C158, C178, C183, C222, C227, C245, C247, C252, C255, H260, C265, C292, and C295. The RING-type 1 zinc-finger motif lies at 133-183 (CGICFESYPLEETISVSCGHPFCATCWTGYISTSINDGPGCLMLKCPYPCC). The segment at 202–265 (ERYYRYFLRS…SEEAHRPVDC (64 aa)) adopts an IBR-type zinc-finger fold. The RING-type 2; atypical zinc finger occupies 292 to 322 (CPKCKRPIEKNHGCMHMTCTPPCKFEFCWLC). C305 is an active-site residue. Positions 310, 314, 319, 322, 329, and 339 each coordinate Zn(2+). The interval 518 to 552 (HAASSKPANCKPSSNTKDGGKGKKEALTMAGSAET) is disordered. Over residues 519–534 (AASSKPANCKPSSNTK) the composition is skewed to polar residues.

The protein belongs to the RBR family. Ariadne subfamily. The cofactor is Zn(2+).

It catalyses the reaction [E2 ubiquitin-conjugating enzyme]-S-ubiquitinyl-L-cysteine + [acceptor protein]-L-lysine = [E2 ubiquitin-conjugating enzyme]-L-cysteine + [acceptor protein]-N(6)-ubiquitinyl-L-lysine.. It functions in the pathway protein modification; protein ubiquitination. Its function is as follows. Might act as an E3 ubiquitin-protein ligase, or as part of E3 complex, which accepts ubiquitin from specific E2 ubiquitin-conjugating enzymes and then transfers it to substrates. The sequence is that of Putative E3 ubiquitin-protein ligase ARI6 (ARI6) from Arabidopsis thaliana (Mouse-ear cress).